The primary structure comprises 406 residues: Cyclin-dependent kinase 4 homolog (406 aa).

The Protein kinase domain occupies Thr102 to Leu388. ATP-binding positions include Leu108–Val116 and Lys131. The Proton acceptor role is filled by Asp233. Mg(2+)-binding residues include Asn238 and Asp251.

Belongs to the protein kinase superfamily. CMGC Ser/Thr protein kinase family. CDC2/CDKX subfamily. As to quaternary structure, interacts with cyd-1; the interaction is likely involved in regulating cdk-4 activity. It depends on Mg(2+) as a cofactor.

It catalyses the reaction L-seryl-[protein] + ATP = O-phospho-L-seryl-[protein] + ADP + H(+). The enzyme catalyses L-threonyl-[protein] + ATP = O-phospho-L-threonyl-[protein] + ADP + H(+). Functionally, serine/threonine-protein kinase which, in association with cyclin D-like protein cyd-1, is required for the progression through the G1 phase of the cell cycle during postembryonic development by phosphorylating and inhibiting lin-35 and fzr-1. In complex with cyd-1, involved in sex determination during gonadogenesis by regulating the asymmetric division of the somatic gonadal precursor cell (SGP). The sequence is that of Cyclin-dependent kinase 4 homolog from Caenorhabditis elegans.